Consider the following 137-residue polypeptide: Major seminal plasma glycoprotein PSP-II (137 aa).

Residues 1–21 (MKLGTAIPWALLLSTATLVST) form the signal peptide. 2 disulfide bridges follow: Cys-30-Cys-51 and Cys-74-Cys-95. The CUB domain occupies 30-131 (CGRVIKDTSG…SPFLIYFYGS (102 aa)). N-linked (GlcNAc...) (complex) asparagine glycosylation occurs at Asn-119.

In terms of assembly, monomer or heterodimer with PSP-I (depending on the type of glycosylation of PSP-I). In terms of tissue distribution, seminal plasma or sperm.

The protein resides in the secreted. This Sus scrofa (Pig) protein is Major seminal plasma glycoprotein PSP-II.